The following is a 128-amino-acid chain: Early E3 14.5 kDa protein (128 aa).

This sequence belongs to the adenoviridae E3_15 family.

Its function is as follows. Protects virus-infected cells from TNF-induced cytolysis. The sequence is that of Early E3 14.5 kDa protein from Human adenovirus C serotype 5 (HAdV-5).